The chain runs to 345 residues: Ferrochelatase (345 aa).

Residues His-199 and Glu-302 each coordinate Fe cation.

It belongs to the ferrochelatase family.

The protein localises to the cytoplasm. The enzyme catalyses heme b + 2 H(+) = protoporphyrin IX + Fe(2+). It functions in the pathway porphyrin-containing compound metabolism; protoheme biosynthesis; protoheme from protoporphyrin-IX: step 1/1. In terms of biological role, catalyzes the ferrous insertion into protoporphyrin IX. The protein is Ferrochelatase of Porphyromonas gingivalis (strain ATCC 33277 / DSM 20709 / CIP 103683 / JCM 12257 / NCTC 11834 / 2561).